A 264-amino-acid chain; its full sequence is MVKSHIGSWILVLFVAMWSDVGLCKKRPKPGGGWNTGGSRYPGPGSPGGNRYPPQGGGGWGQPHGGGWGQPHGGGWGQPHGGGWGQPHGGGWGQPHGGGGWGQGGTHGQWNKPSKPKTNMKHVAGAAAAGAVVGGLGGYMLGSAMSRPLIHFGSDYEDRYYRENMHRYPNQVYYRPVDQYSNQNNFVHDCVNITVKEHTVTTTTKGENFTETDIKMMERVVEQMCITQYQRESQAYYQRGASVILFSSPPVILLISFLIFLIVG.

Positions 1 to 24 (MVKSHIGSWILVLFVAMWSDVGLC) are cleaved as a signal peptide. Residues 25–241 (KKRPKPGGGW…ESQAYYQRGA (217 aa)) form an interaction with GRB2, ERI3 and SYN1 region. The tract at residues 28–118 (PKPGGGWNTG…QWNKPSKPKT (91 aa)) is disordered. The span at 37–54 (GGSRYPGPGSPGGNRYPP) shows a compositional bias: low complexity. 6 consecutive repeat copies span residues 54–62 (PQGGGGWGQ), 63–70 (PHGGGWGQ), 71–78 (PHGGGWGQ), 79–86 (PHGGGWGQ), 87–94 (PHGGGWGQ), and 95–103 (PHGGGGWGQ). Residues 54–103 (PQGGGGWGQPHGGGWGQPHGGGWGQPHGGGWGQPHGGGWGQPHGGGGWGQ) are 6 X 8 AA tandem repeats of P-H-G-G-G-W-G-Q. Residues 55 to 107 (QGGGGWGQPHGGGWGQPHGGGWGQPHGGGWGQPHGGGWGQPHGGGGWGQGGTH) show a composition bias toward gly residues. Residues His72, Gly73, Gly74, His80, Gly81, Gly82, His88, Gly89, Gly90, His96, and Gly98 each contribute to the Cu(2+) site. Cys190 and Cys225 form a disulfide bridge. 2 N-linked (GlcNAc...) asparagine glycosylation sites follow: Asn192 and Asn208. Ala241 is lipidated: GPI-anchor amidated alanine. Positions 242 to 264 (SVILFSSPPVILLISFLIFLIVG) are cleaved as a propeptide — removed in mature form.

It belongs to the prion family. As to quaternary structure, monomer and homodimer. Has a tendency to aggregate into amyloid fibrils containing a cross-beta spine, formed by a steric zipper of superposed beta-strands. Soluble oligomers may represent an intermediate stage on the path to fibril formation. Copper binding may promote oligomerization. Interacts with GRB2, APP, ERI3/PRNPIP and SYN1. Mislocalized cytosolically exposed PrP interacts with MGRN1; this interaction alters MGRN1 subcellular location and causes lysosomal enlargement. Interacts with KIAA1191.

It localises to the cell membrane. Its subcellular location is the golgi apparatus. In terms of biological role, its primary physiological function is unclear. Has cytoprotective activity against internal or environmental stresses. May play a role in neuronal development and synaptic plasticity. May be required for neuronal myelin sheath maintenance. May play a role in iron uptake and iron homeostasis. Soluble oligomers are toxic to cultured neuroblastoma cells and induce apoptosis (in vitro). Association with GPC1 (via its heparan sulfate chains) targets PRNP to lipid rafts. Also provides Cu(2+) or Zn(2+) for the ascorbate-mediated GPC1 deaminase degradation of its heparan sulfate side chains. This Ailuropoda melanoleuca (Giant panda) protein is Major prion protein (PRNP).